Consider the following 273-residue polypeptide: Large ribosomal subunit protein uL2 (273 aa).

The tract at residues 224–264 (AMNPVDHPHGGGEGRNFGKHPVTPWGIQTKGKKTRKNKRTD) is disordered. Basic residues predominate over residues 253 to 264 (KGKKTRKNKRTD).

The protein belongs to the universal ribosomal protein uL2 family. Part of the 50S ribosomal subunit. Forms a bridge to the 30S subunit in the 70S ribosome.

Functionally, one of the primary rRNA binding proteins. Required for association of the 30S and 50S subunits to form the 70S ribosome, for tRNA binding and peptide bond formation. It has been suggested to have peptidyltransferase activity; this is somewhat controversial. Makes several contacts with the 16S rRNA in the 70S ribosome. The chain is Large ribosomal subunit protein uL2 from Buchnera aphidicola subsp. Acyrthosiphon pisum (strain 5A).